A 425-amino-acid chain; its full sequence is Dihydroorotase (425 aa).

Histidine 56 and histidine 58 together coordinate Zn(2+). Residues 58-60 and asparagine 90 each bind substrate; that span reads HWR. 3 residues coordinate Zn(2+): aspartate 147, histidine 174, and histidine 227. Position 273 (asparagine 273) interacts with substrate. Position 300 (aspartate 300) interacts with Zn(2+). The active site involves aspartate 300. Residues histidine 304 and 318 to 319 each bind substrate; that span reads FG.

This sequence belongs to the metallo-dependent hydrolases superfamily. DHOase family. Class I DHOase subfamily. Requires Zn(2+) as cofactor.

The enzyme catalyses (S)-dihydroorotate + H2O = N-carbamoyl-L-aspartate + H(+). It participates in pyrimidine metabolism; UMP biosynthesis via de novo pathway; (S)-dihydroorotate from bicarbonate: step 3/3. Functionally, catalyzes the reversible cyclization of carbamoyl aspartate to dihydroorotate. The polypeptide is Dihydroorotase (Fusobacterium nucleatum subsp. nucleatum (strain ATCC 25586 / DSM 15643 / BCRC 10681 / CIP 101130 / JCM 8532 / KCTC 2640 / LMG 13131 / VPI 4355)).